We begin with the raw amino-acid sequence, 403 residues long: Vacuole membrane protein 1 homolog (403 aa).

Residues 7–33 (IVLSNEKDIQLRIQQLEERKEKRKNVK) adopt a coiled-coil conformation. Transmembrane regions (helical) follow at residues 65–85 (FLLFFIALFASLTFIAVYVPG), 102–122 (IWWVGLGVLSSIGLGTGLHTF), 150–170 (ANSFIQPATAMIGGVSFWMIL), 175–195 (WAALFWGAGTAIGELPPYFVA), 240–260 (LIGNLGFFGILAFASIPNPLF), 263–283 (AGITCGHFLVPFWKFFGATFI), 294–314 (ACFVILAFNMETLTMVISFIE), and 348–368 (VGLAWDCVLFLMISYFLMSIV).

Belongs to the VMP1 family.

The protein localises to the membrane. It is found in the endoplasmic reticulum. The enzyme catalyses a 1,2-diacyl-sn-glycero-3-phospho-L-serine(in) = a 1,2-diacyl-sn-glycero-3-phospho-L-serine(out). It catalyses the reaction cholesterol(in) = cholesterol(out). The catalysed reaction is a 1,2-diacyl-sn-glycero-3-phosphocholine(in) = a 1,2-diacyl-sn-glycero-3-phosphocholine(out). It carries out the reaction a 1,2-diacyl-sn-glycero-3-phosphoethanolamine(in) = a 1,2-diacyl-sn-glycero-3-phosphoethanolamine(out). Its function is as follows. Phospholipid scramblase involved in lipid homeostasis and membrane dynamics processes. Required for autophagosome formation: participates in early stages of autophagosome biogenesis at the endoplasmic reticulum (ER) membrane by reequilibrating the leaflets of the ER as lipids are extracted. In addition to autophagy, involved in other processes in which phospholipid scramblase activity is required. In Dictyostelium discoideum (Social amoeba), this protein is Vacuole membrane protein 1 homolog.